A 594-amino-acid chain; its full sequence is Zinc finger protein 37 (594 aa).

Positions 1–253 (MATSEPAESD…KPEKAPGSGK (253 aa)) are disordered. Phosphothreonine is present on threonine 3. Positions 3 to 74 (TSEPAESDAV…GKKASPSSLK (72 aa)) constitute a KRAB domain. A Phosphoserine modification is found at serine 9. Residues 10–33 (DAVRAKEWEQLEPVQRDVYKDTKL) show a composition bias toward basic and acidic residues. Positions 34–46 (ENCSNPASMGNQD) are enriched in polar residues. The span at 89-111 (QQDDEHREEKQKSQSKLTKEVTL) shows a compositional bias: basic and acidic residues. Polar residues predominate over residues 145–158 (KSSSRGKNSNQNSD). Basic and acidic residues-rich tracts occupy residues 159–172 (SLKK…DHRK) and 181–234 (VNKD…TGEK). C2H2-type zinc fingers lie at residues 255 to 277 (YECN…QRTH), 283 to 305 (YECN…QRTH), 311 to 324 (YECE…GHKH), 339 to 361 (YKCN…LRSH), 367 to 389 (YECK…VRTH), 395 to 417 (YECN…MRIH), 423 to 445 (FECN…QRTH), 451 to 473 (YKCD…MRTH), 479 to 501 (FECN…QRVH), 507 to 529 (YECV…QRTH), 535 to 557 (FECY…QRSH), and 563 to 585 (YECI…MKIH).

This sequence belongs to the krueppel C2H2-type zinc-finger protein family. Expressed in testis and brain.

The protein localises to the nucleus. Functionally, may have a role in regulating spermiogenesis. This chain is Zinc finger protein 37 (Zfp37), found in Mus musculus (Mouse).